The following is a 368-amino-acid chain: 3-dehydroquinate synthase (368 aa).

NAD(+) is bound by residues 71-76 (DGEAFK), 105-109 (GVVGD), 129-130 (TT), K142, K151, and 169-172 (TLRT). Zn(2+) contacts are provided by E184, H247, and H264.

Belongs to the sugar phosphate cyclases superfamily. Dehydroquinate synthase family. It depends on Co(2+) as a cofactor. Zn(2+) serves as cofactor. NAD(+) is required as a cofactor.

Its subcellular location is the cytoplasm. It carries out the reaction 7-phospho-2-dehydro-3-deoxy-D-arabino-heptonate = 3-dehydroquinate + phosphate. It participates in metabolic intermediate biosynthesis; chorismate biosynthesis; chorismate from D-erythrose 4-phosphate and phosphoenolpyruvate: step 2/7. Catalyzes the conversion of 3-deoxy-D-arabino-heptulosonate 7-phosphate (DAHP) to dehydroquinate (DHQ). This is 3-dehydroquinate synthase from Cupriavidus taiwanensis (strain DSM 17343 / BCRC 17206 / CCUG 44338 / CIP 107171 / LMG 19424 / R1) (Ralstonia taiwanensis (strain LMG 19424)).